The primary structure comprises 320 residues: ATP-dependent 6-phosphofructokinase (320 aa).

Glycine 11 contributes to the ATP binding site. 21 to 25 (RAVVR) contacts ADP. Residues 72-73 (RC) and 102-105 (GDGS) contribute to the ATP site. A Mg(2+)-binding site is contributed by aspartate 103. 125–127 (TID) lines the substrate pocket. Aspartate 127 serves as the catalytic Proton acceptor. Arginine 154 provides a ligand contact to ADP. Residues arginine 162 and 169–171 (MGR) contribute to the substrate site. ADP contacts are provided by residues 185-187 (GAE) and 214-216 (KTH). Substrate-binding positions include glutamate 223, arginine 244, and 250 to 253 (HIQR).

Belongs to the phosphofructokinase type A (PFKA) family. ATP-dependent PFK group I subfamily. Prokaryotic clade 'B1' sub-subfamily. Homotetramer. The cofactor is Mg(2+).

Its subcellular location is the cytoplasm. The enzyme catalyses beta-D-fructose 6-phosphate + ATP = beta-D-fructose 1,6-bisphosphate + ADP + H(+). It functions in the pathway carbohydrate degradation; glycolysis; D-glyceraldehyde 3-phosphate and glycerone phosphate from D-glucose: step 3/4. Its activity is regulated as follows. Allosterically activated by ADP and other diphosphonucleosides, and allosterically inhibited by phosphoenolpyruvate. Its function is as follows. Catalyzes the phosphorylation of D-fructose 6-phosphate to fructose 1,6-bisphosphate by ATP, the first committing step of glycolysis. This is ATP-dependent 6-phosphofructokinase from Clostridium botulinum (strain Eklund 17B / Type B).